A 274-amino-acid polypeptide reads, in one-letter code: Large ribosomal subunit protein uL2 (274 aa).

2 disordered regions span residues 34–53 and 216–274; these read IAPIKNSGGRNSQGKMTMRY and RRPR…RRKK.

This sequence belongs to the universal ribosomal protein uL2 family. As to quaternary structure, part of the 50S ribosomal subunit. Forms a bridge to the 30S subunit in the 70S ribosome.

In terms of biological role, one of the primary rRNA binding proteins. Required for association of the 30S and 50S subunits to form the 70S ribosome, for tRNA binding and peptide bond formation. It has been suggested to have peptidyltransferase activity; this is somewhat controversial. Makes several contacts with the 16S rRNA in the 70S ribosome. This Flavobacterium psychrophilum (strain ATCC 49511 / DSM 21280 / CIP 103535 / JIP02/86) protein is Large ribosomal subunit protein uL2.